A 419-amino-acid chain; its full sequence is Putative Bro-N domain-containing protein 201R (419 aa).

The Bro-N domain occupies 4 to 136; the sequence is LINLKDCKEY…KILPSIRKYG (133 aa). Positions 150–195 form a coiled coil; it reads QLALKDKSEEELQIKLQEERIEKENAYMKLRSEAKRHKEQIKRTLE.

This sequence belongs to the IIV-6 201R/289L family.

The polypeptide is Putative Bro-N domain-containing protein 201R (Acheta domesticus (House cricket)).